Consider the following 258-residue polypeptide: uncharacterized protein (258 aa).

Residues 1-20 form the signal peptide; that stretch reads MKCFQKLYIFILILIVLMAG. Cys-21 is lipidated: N-palmitoyl cysteine. Residue Cys-21 is the site of S-diacylglycerol cysteine attachment.

This sequence belongs to the staphylococcal tandem lipoprotein family.

The protein resides in the cell membrane. This is an uncharacterized protein from Staphylococcus aureus (strain bovine RF122 / ET3-1).